Consider the following 379-residue polypeptide: Mannitol-1-phosphate 5-dehydrogenase (379 aa).

3 to 14 (ALHFGAGNIGRG) serves as a coordination point for NAD(+).

Belongs to the mannitol dehydrogenase family.

The enzyme catalyses D-mannitol 1-phosphate + NAD(+) = beta-D-fructose 6-phosphate + NADH + H(+). The polypeptide is Mannitol-1-phosphate 5-dehydrogenase (Actinobacillus pleuropneumoniae serotype 3 (strain JL03)).